Here is a 710-residue protein sequence, read N- to C-terminus: Ribonuclease R (710 aa).

Residues R246–E573 enclose the RNB domain. Residues G625–V705 enclose the S1 motif domain.

Belongs to the RNR ribonuclease family. RNase R subfamily.

It localises to the cytoplasm. The catalysed reaction is Exonucleolytic cleavage in the 3'- to 5'-direction to yield nucleoside 5'-phosphates.. Its function is as follows. 3'-5' exoribonuclease that releases 5'-nucleoside monophosphates and is involved in maturation of structured RNAs. This chain is Ribonuclease R, found in Thermotoga maritima (strain ATCC 43589 / DSM 3109 / JCM 10099 / NBRC 100826 / MSB8).